A 285-amino-acid polypeptide reads, in one-letter code: Methyltransferase grgD (285 aa).

It belongs to the methyltransferase superfamily. LaeA methyltransferase family.

Its pathway is secondary metabolite biosynthesis. In terms of biological role, methyltransferase; part of the gene cluster that mediates the biosynthesis of gregatin A, a fungal polyketide featuring an alkylated furanone core. The PKS grgA synthesizes C11 and C4 polyketide chains in the presence and absence of the trans-enoyl reductase grgB, respectively. The polyketide transferase grgF is then responsible for the fusion of the two carbon chains to produce the furanone skeleton of gregatin A. Next, the cytochrome P450 monooxygenase grgG accepts performs the oxidative cyclization to furnish the gregatin scaffold and leads to the formation of desmethylgregatin A. Finally, the O-methyltransferase grgD methylates the carboxyl group of desmethylgregatin A to provide gregatin A. This chain is Methyltransferase grgD, found in Penicillium sp.